Reading from the N-terminus, the 493-residue chain is Exosome complex component Rrp41 (493 aa).

2 disordered regions span residues 244-264 and 291-493; these read VSEETAPEKGAEKEVLEPSPV and LASE…EKDE. Residues 249 to 259 are compositionally biased toward basic and acidic residues; it reads APEKGAEKEVL. Acidic residues predominate over residues 297–377; the sequence is PDFEDELEEE…ALEEETELEA (81 aa). Over residues 383–400 the composition is skewed to basic and acidic residues; the sequence is PELKEFDEIEARLEKEDA. A compositionally biased stretch (acidic residues) spans 401 to 471; that stretch reads SIEAEEEIEP…EAEEEPEEEK (71 aa). The span at 472–493 shows a compositional bias: basic and acidic residues; that stretch reads SEGPWKVVKDPSEAGTRGEKDE.

Belongs to the RNase PH family. Rrp41 subfamily. In terms of assembly, component of the archaeal exosome complex. Forms a hexameric ring-like arrangement composed of 3 Rrp41-Rrp42 heterodimers. The hexameric ring associates with a trimer of Rrp4 and/or Csl4 subunits.

The protein resides in the cytoplasm. Functionally, catalytic component of the exosome, which is a complex involved in RNA degradation. Has 3'-&gt;5' exoribonuclease activity. Can also synthesize heteromeric RNA-tails. The chain is Exosome complex component Rrp41 from Methanosarcina mazei (strain ATCC BAA-159 / DSM 3647 / Goe1 / Go1 / JCM 11833 / OCM 88) (Methanosarcina frisia).